The chain runs to 393 residues: Prokineticin receptor 1 (393 aa).

The Extracellular portion of the chain corresponds to 1–62 (METTVGALGE…TNSRTFFAAK (62 aa)). N-linked (GlcNAc...) asparagine glycosylation is present at N11. Residues 63 to 83 (IVIGMALVGIMLVCGIGNFIF) traverse the membrane as a helical segment. At 84–98 (ITALARYKKLRNLTN) the chain is on the cytoplasmic side. The helical transmembrane segment at 99–119 (LLIANLAISDFLVAIVCCPFE) threads the bilayer. Topologically, residues 120 to 146 (MDYYVVRQLSWEHGHVLCASVNYLRTV) are extracellular. C137 and C217 are joined by a disulfide. Residues 147–167 (SLYVSTNALLAIAIDRYLAIV) traverse the membrane as a helical segment. Residues 168–179 (HPLRPRMKCQTA) are Cytoplasmic-facing. Residues 180-200 (AGLIFLVWSVSILIAIPAAYF) traverse the membrane as a helical segment. At 201–232 (TTETVLVIVERQEKIFCGQIWPVDQQFYYRSY) the chain is on the extracellular side. Residues 233-253 (FLLVFGLEFVGPVVAMTLCYA) traverse the membrane as a helical segment. The Cytoplasmic segment spans residues 254 to 282 (RVSRELWFKAVPGFQTEQIRRRLRCRRRT). Residues 283–303 (VLGLVCVLSAYVLCWAPFYGF) traverse the membrane as a helical segment. At 304–322 (TIVRDFFPSVFVKEKHYLT) the chain is on the extracellular side. Residues 323-343 (AFYVVECIAMSNSMINTLCFV) form a helical membrane-spanning segment. Residues 344 to 393 (TVRNNTSKYLKRILRLQWRASPSGSKASADLDLRTTGIPATEEVDCIRLK) lie on the Cytoplasmic side of the membrane.

This sequence belongs to the G-protein coupled receptor 1 family. Expressed at high levels in the heart, skeletal muscle and pancreas. Expressed at lower levels in the brain, lung, liver and kidney.

Its subcellular location is the cell membrane. Receptor for prokineticin 1. Exclusively coupled to the G(q) subclass of heteromeric G proteins. Activation leads to mobilization of calcium, stimulation of phosphoinositide turnover and activation of p44/p42 mitogen-activated protein kinase. May play a role during early pregnancy. This is Prokineticin receptor 1 (Prokr1) from Mus musculus (Mouse).